Reading from the N-terminus, the 234-residue chain is MVSQFDTQHLLNSNTALVAGVDEAGRGPLAGPVVVAAVVFDPSQPRINGLNDSKQLSPACRERLYAHIVERALAYKVVMIDSTQIDTLNIYQATMLGMRLAVEGVAHVAKSARIDGNRLPKNLPCPAEALVGGDARDPTIMAASILAKVTRDRHMVELHLQYPHYGFDKHKGYGTPAHLAALAEHGPCLEHRQSFAPVRRMLTPKAIHARQSAHQHNDNSPTKAAFNMLIERDD.

Residues 16 to 207 (ALVAGVDEAG…VRRMLTPKAI (192 aa)) form the RNase H type-2 domain. Residues aspartate 22, glutamate 23, and aspartate 115 each contribute to the a divalent metal cation site.

The protein belongs to the RNase HII family. The cofactor is Mn(2+). Requires Mg(2+) as cofactor.

The protein localises to the cytoplasm. The enzyme catalyses Endonucleolytic cleavage to 5'-phosphomonoester.. Its function is as follows. Endonuclease that specifically degrades the RNA of RNA-DNA hybrids. The protein is Ribonuclease HII of Xylella fastidiosa (strain M12).